We begin with the raw amino-acid sequence, 133 residues long: Ribonuclease P protein component (133 aa).

Belongs to the RnpA family. In terms of assembly, consists of a catalytic RNA component (M1 or rnpB) and a protein subunit.

It carries out the reaction Endonucleolytic cleavage of RNA, removing 5'-extranucleotides from tRNA precursor.. Functionally, RNaseP catalyzes the removal of the 5'-leader sequence from pre-tRNA to produce the mature 5'-terminus. It can also cleave other RNA substrates such as 4.5S RNA. The protein component plays an auxiliary but essential role in vivo by binding to the 5'-leader sequence and broadening the substrate specificity of the ribozyme. The chain is Ribonuclease P protein component from Bartonella quintana (strain Toulouse) (Rochalimaea quintana).